The following is a 311-amino-acid chain: tRNA (guanine-N(7)-)-methyltransferase (311 aa).

S-adenosyl-L-methionine is bound by residues glutamate 28, glutamate 53, and aspartate 103. Aspartate 103 is a catalytic residue. Residues lysine 107 and aspartate 139 each contribute to the substrate site.

The protein belongs to the class I-like SAM-binding methyltransferase superfamily. TrmB family.

The enzyme catalyses guanosine(46) in tRNA + S-adenosyl-L-methionine = N(7)-methylguanosine(46) in tRNA + S-adenosyl-L-homocysteine. The protein operates within tRNA modification; N(7)-methylguanine-tRNA biosynthesis. Functionally, catalyzes the formation of N(7)-methylguanine at position 46 (m7G46) in tRNA. The protein is tRNA (guanine-N(7)-)-methyltransferase of Thermus thermophilus (strain ATCC BAA-163 / DSM 7039 / HB27).